A 197-amino-acid chain; its full sequence is Transposon Tn10 TetC protein (197 aa).

Residues lysine 12–isoleucine 72 enclose the HTH tetR-type domain. Residues serine 35–phenylalanine 54 constitute a DNA-binding region (H-T-H motif).

The chain is Transposon Tn10 TetC protein (tetC) from Escherichia coli.